The primary structure comprises 475 residues: UDP-N-acetylmuramoylalanine--D-glutamate ligase (475 aa).

Residue 130 to 136 (GTNGKTT) coordinates ATP.

Belongs to the MurCDEF family.

The protein localises to the cytoplasm. The enzyme catalyses UDP-N-acetyl-alpha-D-muramoyl-L-alanine + D-glutamate + ATP = UDP-N-acetyl-alpha-D-muramoyl-L-alanyl-D-glutamate + ADP + phosphate + H(+). It participates in cell wall biogenesis; peptidoglycan biosynthesis. Cell wall formation. Catalyzes the addition of glutamate to the nucleotide precursor UDP-N-acetylmuramoyl-L-alanine (UMA). The chain is UDP-N-acetylmuramoylalanine--D-glutamate ligase from Corynebacterium efficiens (strain DSM 44549 / YS-314 / AJ 12310 / JCM 11189 / NBRC 100395).